Here is a 76-residue protein sequence, read N- to C-terminus: DNA gyrase inhibitor YacG (76 aa).

Residues Cys20, Cys23, Cys39, and Cys43 each coordinate Zn(2+). A disordered region spans residues 54 to 76 (EEKSIPGAPDLSDSDGWSDDMGY). Positions 65–76 (SDSDGWSDDMGY) are enriched in acidic residues.

Belongs to the DNA gyrase inhibitor YacG family. Interacts with GyrB. Zn(2+) serves as cofactor.

Functionally, inhibits all the catalytic activities of DNA gyrase by preventing its interaction with DNA. Acts by binding directly to the C-terminal domain of GyrB, which probably disrupts DNA binding by the gyrase. This Photobacterium profundum (strain SS9) protein is DNA gyrase inhibitor YacG.